The sequence spans 77 residues: Putative defensin-like protein 185 (77 aa).

An N-terminal signal peptide occupies residues 1–22; the sequence is MKNSSILLLLVVFFVISSSGEA. Intrachain disulfides connect cysteine 25–cysteine 77, cysteine 31–cysteine 54, cysteine 40–cysteine 71, and cysteine 44–cysteine 73.

Belongs to the DEFL family.

The protein localises to the secreted. The polypeptide is Putative defensin-like protein 185 (LCR39) (Arabidopsis thaliana (Mouse-ear cress)).